We begin with the raw amino-acid sequence, 93 residues long: Large ribosomal subunit protein uL23 (93 aa).

Belongs to the universal ribosomal protein uL23 family. As to quaternary structure, part of the 50S ribosomal subunit. Contacts protein L29, and trigger factor when it is bound to the ribosome.

Its function is as follows. One of the early assembly proteins it binds 23S rRNA. One of the proteins that surrounds the polypeptide exit tunnel on the outside of the ribosome. Forms the main docking site for trigger factor binding to the ribosome. The protein is Large ribosomal subunit protein uL23 of Campylobacter jejuni subsp. jejuni serotype O:6 (strain 81116 / NCTC 11828).